The sequence spans 498 residues: Hexokinase-1 (498 aa).

Residues 39–492 (AAAQRVVAEL…SGLGAALVAA (454 aa)) enclose the Hexokinase domain. Residues 95-233 (TGGEEGSYYA…GLDMRVSALI (139 aa)) form a hexokinase small subdomain region. Residues Gly-109, Thr-110, and Asn-111 each contribute to the ADP site. The D-glucose site is built by Thr-199, Lys-200, Asn-234, and Asp-235. The interval 234-481 (NDTVGTLAAG…ERVVVKLASD (248 aa)) is hexokinase large subdomain. Residue Thr-258 coordinates ADP. D-glucose is bound by residues Asn-261, Glu-290, and Glu-321. Residue Gly-446 participates in ADP binding.

The protein belongs to the hexokinase family. Highly expressed in senescent leaves.

The catalysed reaction is a D-hexose + ATP = a D-hexose 6-phosphate + ADP + H(+). It catalyses the reaction D-fructose + ATP = D-fructose 6-phosphate + ADP + H(+). The enzyme catalyses D-glucose + ATP = D-glucose 6-phosphate + ADP + H(+). Its pathway is carbohydrate metabolism; hexose metabolism. The protein operates within carbohydrate degradation; glycolysis; D-glyceraldehyde 3-phosphate and glycerone phosphate from D-glucose: step 1/4. In terms of biological role, fructose and glucose phosphorylating enzyme. Acts as a positive regulator of leaf senescence by mediating glucose accumulation and inducing an increase in reactive oxygen species (ROS). The sequence is that of Hexokinase-1 (HXK1) from Oryza sativa subsp. japonica (Rice).